Consider the following 243-residue polypeptide: Probable transcriptional regulatory protein LCA_1307 (243 aa).

A disordered region spans residues 1-21; it reads MSGHSKWHNIQGRKNAQDAKR.

This sequence belongs to the TACO1 family.

The protein localises to the cytoplasm. The chain is Probable transcriptional regulatory protein LCA_1307 from Latilactobacillus sakei subsp. sakei (strain 23K) (Lactobacillus sakei subsp. sakei).